Consider the following 498-residue polypeptide: MAPPMTNCLTFSLSPMEMLKSTDQSHFSSSYDDSSTPYLIDNFYAFKEEAEIEAAAASMADSTTLSTFFDHSQTQIPKLEDFLGDSFVRYSDNQTETQDSSSLTPFYDPRHRTVAEGVTGFFSDHHQPDFKTINSGPEIFDDSTTSNIGGTHLSSHVVESSTTAKLGFNGDCTTTGGVLSLGVNNTSDQPLSCNNGERGGNSNKKKTVSKKETSDDSKKKIVETLGQRTSIYRGVTRHRWTGRYEAHLWDNSCRREGQARKGRQVYLGGYDKEDRAARAYDLAALKYWGSTATTNFPVSSYSKELEEMNHMTKQEFIASLRRKSSGFSRGASIYRGVTRHHQQGRWQARIGRVAGNKDLYLGTFATEEEAAEAYDIAAIKFRGINAVTNFEMNRYDIEAVMNSSLPVGGAAAKRHKLKLALESPSSSSSDHNLQQQQLLPSSSPSDQNPNSIPCGIPFEPSVLYYHQNFFQHYPLVSDSTIQAPMNQAEFFLWPNQSY.

Residues 186-195 (TSDQPLSCNN) are compositionally biased toward polar residues. The segment at 186-220 (TSDQPLSCNNGERGGNSNKKKTVSKKETSDDSKKK) is disordered. The segment covering 209-220 (SKKETSDDSKKK) has biased composition (basic and acidic residues). 2 DNA-binding regions (AP2/ERF) span residues 231–297 (IYRG…TNFP) and 333–391 (IYRG…TNFE). Residues 422–451 (ESPSSSSSDHNLQQQQLLPSSSPSDQNPNS) show a composition bias toward low complexity. The segment at 422–452 (ESPSSSSSDHNLQQQQLLPSSSPSDQNPNSI) is disordered.

It belongs to the AP2/ERF transcription factor family. AP2 subfamily. As to quaternary structure, interacts with HDG2, and possibly with HDG3, HDG7, ANL2, ATML1 and PDF2. In terms of tissue distribution, expressed in roots, seedlings, inflorescence, and siliques. Also detected at low levels in leaves.

It is found in the nucleus. Functionally, probably acts as a transcriptional activator. Binds to the GCC-box pathogenesis-related promoter element. May be involved in the regulation of gene expression by stress factors and by components of stress signal transduction pathways. This Arabidopsis thaliana (Mouse-ear cress) protein is AP2-like ethylene-responsive transcription factor AIL7.